A 185-amino-acid chain; its full sequence is Protein GrpE (185 aa).

Residues 1 to 11 show a composition bias toward polar residues; it reads MENTQENPTDQ. A disordered region spans residues 1–38; sequence MENTQENPTDQTTEETGREAQAAEPAAQAAENAAPAAE. Positions 19-38 are enriched in low complexity; the sequence is EAQAAEPAAQAAENAAPAAE.

The protein belongs to the GrpE family. As to quaternary structure, homodimer.

The protein resides in the cytoplasm. Participates actively in the response to hyperosmotic and heat shock by preventing the aggregation of stress-denatured proteins, in association with DnaK and GrpE. It is the nucleotide exchange factor for DnaK and may function as a thermosensor. Unfolded proteins bind initially to DnaJ; upon interaction with the DnaJ-bound protein, DnaK hydrolyzes its bound ATP, resulting in the formation of a stable complex. GrpE releases ADP from DnaK; ATP binding to DnaK triggers the release of the substrate protein, thus completing the reaction cycle. Several rounds of ATP-dependent interactions between DnaJ, DnaK and GrpE are required for fully efficient folding. This chain is Protein GrpE, found in Burkholderia mallei (strain NCTC 10247).